Here is an 859-residue protein sequence, read N- to C-terminus: Leucine--tRNA ligase (859 aa).

A 'HIGH' region motif is present at residues 42-52; the sequence is PYPSGRLHMGH. Positions 618 to 622 match the 'KMSKS' region motif; that stretch reads KMSKS. ATP is bound at residue Lys621.

The protein belongs to the class-I aminoacyl-tRNA synthetase family.

It is found in the cytoplasm. It carries out the reaction tRNA(Leu) + L-leucine + ATP = L-leucyl-tRNA(Leu) + AMP + diphosphate. In Shewanella baltica (strain OS223), this protein is Leucine--tRNA ligase.